We begin with the raw amino-acid sequence, 179 residues long: Large ribosomal subunit protein uL5 (179 aa).

Belongs to the universal ribosomal protein uL5 family. Part of the 50S ribosomal subunit; part of the 5S rRNA/L5/L18/L25 subcomplex. Contacts the 5S rRNA and the P site tRNA. Forms a bridge to the 30S subunit in the 70S ribosome.

In terms of biological role, this is one of the proteins that bind and probably mediate the attachment of the 5S RNA into the large ribosomal subunit, where it forms part of the central protuberance. In the 70S ribosome it contacts protein S13 of the 30S subunit (bridge B1b), connecting the 2 subunits; this bridge is implicated in subunit movement. Contacts the P site tRNA; the 5S rRNA and some of its associated proteins might help stabilize positioning of ribosome-bound tRNAs. The chain is Large ribosomal subunit protein uL5 from Buchnera aphidicola subsp. Acyrthosiphon kondoi (Acyrthosiphon kondoi symbiotic bacterium).